The chain runs to 456 residues: General transcription factor IIE subunit 1 (456 aa).

In terms of domain architecture, HTH TFE/IIEalpha-type spans 11 to 100 (LDDLVKMVIR…LWYIDYKHII (90 aa)). A C4-type zinc finger spans residues 129–157 (CQTCHKVYTALDIPKLLNMDTGALACEIC). The segment at 345–402 (ESAPDSGDADGNGSNSGSGGSTIEGNDGGNGEHQNKKMKLDDSQTVSSMSQSDDDGKD) is disordered. The span at 347–357 (APDSGDADGNG) shows a compositional bias: low complexity. Over residues 358–375 (SNSGSGGSTIEGNDGGNG) the composition is skewed to gly residues. Over residues 377 to 386 (HQNKKMKLDD) the composition is skewed to basic and acidic residues.

The protein belongs to the TFIIE alpha subunit family. As to quaternary structure, TFIIE is a tetramer of two alpha and two beta subunits.

Its subcellular location is the nucleus. In terms of biological role, recruits TFIIH to the initiation complex and stimulates the RNA polymerase II C-terminal domain kinase and DNA-dependent ATPase activities of TFIIH. Both TFIIH and TFIIE are required for promoter clearance by RNA polymerase. This Dictyostelium discoideum (Social amoeba) protein is General transcription factor IIE subunit 1 (gtf2e1-1).